Here is a 333-residue protein sequence, read N- to C-terminus: Casein kinase II subunit beta-1 (333 aa).

Acidic residues predominate over residues 58 to 78 (VEPEDDDDEEEEDEEDEEDMS). Disordered stretches follow at residues 58 to 92 (VEPE…ERRH) and 282 to 333 (ARRY…ESEL). The span at 305–316 (ASRRRGPPRRQK) shows a compositional bias: basic residues.

The protein belongs to the casein kinase 2 subunit beta family. Tetramer composed of two alpha chains, one beta chain and one beta' chain. In terms of processing, phosphorylated by alpha subunit.

In terms of biological role, regulatory subunit of casein kinase II/CK2. As part of the kinase complex regulates the basal catalytic activity of the alpha subunit a constitutively active serine/threonine-protein kinase that phosphorylates a large number of substrates containing acidic residues C-terminal to the phosphorylated serine or threonine. In Neurospora crassa (strain ATCC 24698 / 74-OR23-1A / CBS 708.71 / DSM 1257 / FGSC 987), this protein is Casein kinase II subunit beta-1 (ckb-1).